Consider the following 44-residue polypeptide: Antibacterial protein 3 (44 aa).

Residue M1 is modified to N-formylmethionine.

This sequence belongs to the staphylococcal hemolytic protein family.

The protein localises to the secreted. Has hemolytic activity and also inhibits the growth of gonococci. This chain is Antibacterial protein 3, found in Staphylococcus haemolyticus.